The following is a 1084-amino-acid chain: Cellulose synthase A catalytic subunit 6 [UDP-forming] (1084 aa).

At M1 the chain carries N-acetylmethionine. Over 1–277 (MNTGGRLIAG…KSSKINPYRM (277 aa)) the chain is Cytoplasmic. Residues C39, C42, C58, C61, C66, C69, C81, and C84 each coordinate Zn(2+). The RING-type; degenerate zinc finger occupies 39–85 (CQICRDEIELTVDGEPFVACNECAFPVCRPCYEYERREGNQACPQCK). A helical transmembrane segment spans residues 278–298 (LIVLRLVILGLFFHYRILHPV). Over 299–300 (KD) the chain is Extracellular. The helical transmembrane segment at 301-321 (AYALWLISVICEIWFAVSWVL) threads the bilayer. At 322–868 (DQFPKWYPIE…INSVVYPWTS (547 aa)) the chain is on the cytoplasmic side. Residues S360, K366, E367, and D396 each contribute to the UDP-alpha-D-glucose site. The active site involves D396. Residues 450 to 476 (VRERRAMKRDYEEFKVKINALVATAQK) adopt a coiled-coil conformation. K537 is a binding site for UDP-alpha-D-glucose. Mn(2+) is bound by residues K538 and D562. Positions 675-703 (RKAKTVAADKKKKNREASKQIHALENIEE) form a coiled coil. D785 is an active-site residue. Residues 869–889 (LPLIVYCSLPAICLLTGKFIV) form a helical membrane-spanning segment. Topologically, residues 890–894 (PEISN) are extracellular. A helical membrane pass occupies residues 895–915 (YASILFMALFSSIAITGILEM). Residues 916 to 930 (QWGKVGIDDWWRNEQ) lie on the Cytoplasmic side of the membrane. Residues 931 to 951 (FWVIGGVSAHLFALFQGLLKV) traverse the membrane as a helical segment. Over 952-980 (LAGVDTNFTVTSKAADDGEFSDLYLFKWT) the chain is Extracellular. N958 carries N-linked (GlcNAc...) asparagine glycosylation. The chain crosses the membrane as a helical span at residues 981–1001 (SLLIPPMTLLIINVIGVIVGV). The Cytoplasmic segment spans residues 1002–1012 (SDAISNGYDSW). The helical transmembrane segment at 1013-1033 (GPLFGRLFFALWVIIHLYPFL) threads the bilayer. Residues 1034–1042 (KGLLGKQDR) are Extracellular-facing. Residues 1043-1063 (MPTIIVVWSILLASILTLLWV) form a helical membrane-spanning segment. The Cytoplasmic portion of the chain corresponds to 1064 to 1084 (RVNPFVAKGGPILEICGLDCL).

Belongs to the glycosyltransferase 2 family. Plant cellulose synthase subfamily. In terms of assembly, interacts with CESA1 and CESA3. Interacts with STL1 and STL2, but not with GOT1. Binds to CSI1 and CSI3. Interacts with PAT24/TIP1. The cofactor is Zn(2+). Requires Mn(2+) as cofactor. Post-translationally, S-acylated. In terms of tissue distribution, expressed in germinating seeds, seedlings, roots, stems, leaves and flowers. Not present in mature flowers.

It localises to the cell membrane. The catalysed reaction is [(1-&gt;4)-beta-D-glucosyl](n) + UDP-alpha-D-glucose = [(1-&gt;4)-beta-D-glucosyl](n+1) + UDP + H(+). It functions in the pathway glycan metabolism; plant cellulose biosynthesis. Its function is as follows. Catalytic subunit of cellulose synthase terminal complexes ('rosettes'), required for beta-1,4-glucan microfibril crystallization, a major mechanism of the cell wall formation. Involved in the primary cell wall formation. The presence of each protein CESA1 and CESA6 is critical for cell expansion. The hypocotyl elongation is based on a CESA6-dependent cell elongation in dark and a CESA6-independent cell elongation in light. The transition between these two mechanisms requires photosynthesis and PHYB, but not CRY1. The CESA6-dependent cell elongation seems to be independent of gibberellic acid, auxin and ethylene. May be involved in sensitivity to isoxaben. Associates with and moves along cortical microtubules for the process of cellulose deposition. This is Cellulose synthase A catalytic subunit 6 [UDP-forming] from Arabidopsis thaliana (Mouse-ear cress).